Consider the following 120-residue polypeptide: NAD(P)H-quinone oxidoreductase subunit 3, chloroplastic (120 aa).

Transmembrane regions (helical) follow at residues 9-29 (IFWA…FISG), 64-84 (MFAL…PWAM), and 88-108 (VLGV…IVGS).

This sequence belongs to the complex I subunit 3 family. NDH is composed of at least 16 different subunits, 5 of which are encoded in the nucleus.

Its subcellular location is the plastid. It is found in the chloroplast thylakoid membrane. It carries out the reaction a plastoquinone + NADH + (n+1) H(+)(in) = a plastoquinol + NAD(+) + n H(+)(out). It catalyses the reaction a plastoquinone + NADPH + (n+1) H(+)(in) = a plastoquinol + NADP(+) + n H(+)(out). Functionally, NDH shuttles electrons from NAD(P)H:plastoquinone, via FMN and iron-sulfur (Fe-S) centers, to quinones in the photosynthetic chain and possibly in a chloroplast respiratory chain. The immediate electron acceptor for the enzyme in this species is believed to be plastoquinone. Couples the redox reaction to proton translocation, and thus conserves the redox energy in a proton gradient. In Vitis vinifera (Grape), this protein is NAD(P)H-quinone oxidoreductase subunit 3, chloroplastic.